Here is a 681-residue protein sequence, read N- to C-terminus: Probable L-type lectin-domain containing receptor kinase VII.2 (681 aa).

The first 23 residues, Met-1–Gly-23, serve as a signal peptide directing secretion. Residues Ile-24–Ser-260 form a legume-lectin like region. The Extracellular segment spans residues Ile-24–Gly-290. N-linked (GlcNAc...) asparagine glycosylation is found at Asn-31, Asn-42, Asn-56, Asn-72, Asn-126, Asn-202, Asn-207, Asn-228, and Asn-263. A helical transmembrane segment spans residues Phe-291–Phe-311. The Cytoplasmic portion of the chain corresponds to Tyr-312–Arg-681. Residues Phe-349–Leu-624 form the Protein kinase domain. ATP is bound by residues Ile-355 to Val-363 and Lys-376. Asp-475 acts as the Proton acceptor in catalysis.

In the C-terminal section; belongs to the protein kinase superfamily. Ser/Thr protein kinase family. This sequence in the N-terminal section; belongs to the leguminous lectin family.

The protein localises to the cell membrane. The catalysed reaction is L-seryl-[protein] + ATP = O-phospho-L-seryl-[protein] + ADP + H(+). It carries out the reaction L-threonyl-[protein] + ATP = O-phospho-L-threonyl-[protein] + ADP + H(+). The protein is Probable L-type lectin-domain containing receptor kinase VII.2 (LECRK72) of Arabidopsis thaliana (Mouse-ear cress).